We begin with the raw amino-acid sequence, 131 residues long: Sec-independent protein translocase protein TatB (131 aa).

A helical membrane pass occupies residues 2-22 (FDGIGFMELLLIGVLGLVVLG). The segment at 69–131 (NQGLKNLAPE…ENAKSDKPNG (63 aa)) is disordered. The segment covering 105–123 (AKETPAKETATTETTSTEN) has biased composition (low complexity).

This sequence belongs to the TatB family. In terms of assembly, the Tat system comprises two distinct complexes: a TatABC complex, containing multiple copies of TatA, TatB and TatC subunits, and a separate TatA complex, containing only TatA subunits. Substrates initially bind to the TatABC complex, which probably triggers association of the separate TatA complex to form the active translocon.

It is found in the cell inner membrane. Part of the twin-arginine translocation (Tat) system that transports large folded proteins containing a characteristic twin-arginine motif in their signal peptide across membranes. Together with TatC, TatB is part of a receptor directly interacting with Tat signal peptides. TatB may form an oligomeric binding site that transiently accommodates folded Tat precursor proteins before their translocation. In Shewanella piezotolerans (strain WP3 / JCM 13877), this protein is Sec-independent protein translocase protein TatB.